Here is a 181-residue protein sequence, read N- to C-terminus: Protein GrpE (181 aa).

Residues 1 to 10 (MENTQENPAT) are compositionally biased toward polar residues. The tract at residues 1-33 (MENTQENPATPSAEDIGSEKQAAQGAAPAAEAA) is disordered. Low complexity predominate over residues 21 to 33 (QAAQGAAPAAEAA).

The protein belongs to the GrpE family. Homodimer.

It is found in the cytoplasm. Functionally, participates actively in the response to hyperosmotic and heat shock by preventing the aggregation of stress-denatured proteins, in association with DnaK and GrpE. It is the nucleotide exchange factor for DnaK and may function as a thermosensor. Unfolded proteins bind initially to DnaJ; upon interaction with the DnaJ-bound protein, DnaK hydrolyzes its bound ATP, resulting in the formation of a stable complex. GrpE releases ADP from DnaK; ATP binding to DnaK triggers the release of the substrate protein, thus completing the reaction cycle. Several rounds of ATP-dependent interactions between DnaJ, DnaK and GrpE are required for fully efficient folding. This chain is Protein GrpE, found in Burkholderia cenocepacia (strain ATCC BAA-245 / DSM 16553 / LMG 16656 / NCTC 13227 / J2315 / CF5610) (Burkholderia cepacia (strain J2315)).